The following is an 874-amino-acid chain: Alanine--tRNA ligase (874 aa).

Zn(2+) is bound by residues His562, His566, Cys664, and His668.

The protein belongs to the class-II aminoacyl-tRNA synthetase family. Requires Zn(2+) as cofactor.

The protein resides in the cytoplasm. It catalyses the reaction tRNA(Ala) + L-alanine + ATP = L-alanyl-tRNA(Ala) + AMP + diphosphate. In terms of biological role, catalyzes the attachment of alanine to tRNA(Ala) in a two-step reaction: alanine is first activated by ATP to form Ala-AMP and then transferred to the acceptor end of tRNA(Ala). Also edits incorrectly charged Ser-tRNA(Ala) and Gly-tRNA(Ala) via its editing domain. This chain is Alanine--tRNA ligase, found in Shewanella oneidensis (strain ATCC 700550 / JCM 31522 / CIP 106686 / LMG 19005 / NCIMB 14063 / MR-1).